A 330-amino-acid chain; its full sequence is Ferredoxin--NADP reductase (330 aa).

FAD-binding residues include glutamate 35, glutamine 43, tyrosine 48, valine 90, phenylalanine 123, aspartate 285, and threonine 326.

This sequence belongs to the ferredoxin--NADP reductase type 2 family. As to quaternary structure, homodimer. FAD is required as a cofactor.

The enzyme catalyses 2 reduced [2Fe-2S]-[ferredoxin] + NADP(+) + H(+) = 2 oxidized [2Fe-2S]-[ferredoxin] + NADPH. The chain is Ferredoxin--NADP reductase from Streptococcus agalactiae serotype Ia (strain ATCC 27591 / A909 / CDC SS700).